A 472-amino-acid chain; its full sequence is Tryptophanase (472 aa).

Lysine 270 is subject to N6-(pyridoxal phosphate)lysine.

This sequence belongs to the beta-eliminating lyase family. As to quaternary structure, homotetramer. Pyridoxal 5'-phosphate serves as cofactor.

The enzyme catalyses L-tryptophan + H2O = indole + pyruvate + NH4(+). It functions in the pathway amino-acid degradation; L-tryptophan degradation via pyruvate pathway; indole and pyruvate from L-tryptophan: step 1/1. The sequence is that of Tryptophanase from Haemophilus influenzae (strain 86-028NP).